Reading from the N-terminus, the 132-residue chain is Hydrogenase maturation factor HypA (132 aa).

H2 contacts Ni(2+). Positions 74, 77, 91, and 94 each coordinate Zn(2+).

This sequence belongs to the HypA/HybF family.

Involved in the maturation of [NiFe] hydrogenases. Required for nickel insertion into the metal center of the hydrogenase. This chain is Hydrogenase maturation factor HypA, found in Synechococcus sp. (strain JA-2-3B'a(2-13)) (Cyanobacteria bacterium Yellowstone B-Prime).